The primary structure comprises 369 residues: Phospho-N-acetylmuramoyl-pentapeptide-transferase (369 aa).

The next 10 membrane-spanning stretches (helical) occupy residues 2–22, 55–75, 86–106, 120–140, 163–183, 196–216, 239–259, 266–286, 291–311, and 348–368; these read IALL…TPLF, TVVV…MFLM, ALIL…DDFI, AKLI…LNFP, LAFG…NLIV, LDGL…LMGI, PLDL…FLWW, IFMG…FAIL, LLLG…IIQV, and ILGG…WVVL.

The protein belongs to the glycosyltransferase 4 family. MraY subfamily. Mg(2+) serves as cofactor.

It localises to the cell membrane. It carries out the reaction UDP-N-acetyl-alpha-D-muramoyl-L-alanyl-gamma-D-glutamyl-meso-2,6-diaminopimeloyl-D-alanyl-D-alanine + di-trans,octa-cis-undecaprenyl phosphate = di-trans,octa-cis-undecaprenyl diphospho-N-acetyl-alpha-D-muramoyl-L-alanyl-D-glutamyl-meso-2,6-diaminopimeloyl-D-alanyl-D-alanine + UMP. The protein operates within cell wall biogenesis; peptidoglycan biosynthesis. Catalyzes the initial step of the lipid cycle reactions in the biosynthesis of the cell wall peptidoglycan: transfers peptidoglycan precursor phospho-MurNAc-pentapeptide from UDP-MurNAc-pentapeptide onto the lipid carrier undecaprenyl phosphate, yielding undecaprenyl-pyrophosphoryl-MurNAc-pentapeptide, known as lipid I. This Pseudarthrobacter chlorophenolicus (strain ATCC 700700 / DSM 12829 / CIP 107037 / JCM 12360 / KCTC 9906 / NCIMB 13794 / A6) (Arthrobacter chlorophenolicus) protein is Phospho-N-acetylmuramoyl-pentapeptide-transferase.